Here is an 88-residue protein sequence, read N- to C-terminus: Small ribosomal subunit protein uS19 (88 aa).

The protein belongs to the universal ribosomal protein uS19 family.

Protein S19 forms a complex with S13 that binds strongly to the 16S ribosomal RNA. In Chlamydia felis (strain Fe/C-56) (Chlamydophila felis), this protein is Small ribosomal subunit protein uS19.